Consider the following 332-residue polypeptide: Large ribosomal subunit protein mL44 (332 aa).

Residues 1 to 30 (MASGLTRLLLRGPRCLLATAGLTLIPPVRG) constitute a mitochondrion transit peptide. Residues 86 to 228 (DLLKTAFVNS…LITQMTGKEL (143 aa)) enclose the RNase III domain. Residues 236-306 (NPMGLLVQEL…ARVALRKLYG (71 aa)) form the DRBM domain.

It belongs to the ribonuclease III family. Mitochondrion-specific ribosomal protein mL44 subfamily. As to quaternary structure, component of the mitochondrial ribosome large subunit (39S) which comprises a 16S rRNA and about 50 distinct proteins.

It localises to the mitochondrion. Functionally, component of the 39S subunit of mitochondrial ribosome. May have a function in the assembly/stability of nascent mitochondrial polypeptides exiting the ribosome. The protein is Large ribosomal subunit protein mL44 (MRPL44) of Bos taurus (Bovine).